Here is a 326-residue protein sequence, read N- to C-terminus: Malate dehydrogenase (326 aa).

Gly11–Gly17 lines the NAD(+) pocket. Substrate-binding residues include Arg92 and Arg98. Residues Asn105, Gln112, and Val129 to Asn131 contribute to the NAD(+) site. Substrate-binding residues include Asn131 and Arg162. Catalysis depends on His187, which acts as the Proton acceptor.

It belongs to the LDH/MDH superfamily. MDH type 2 family.

The catalysed reaction is (S)-malate + NAD(+) = oxaloacetate + NADH + H(+). Functionally, catalyzes the reversible oxidation of malate to oxaloacetate. This Chromobacterium violaceum (strain ATCC 12472 / DSM 30191 / JCM 1249 / CCUG 213 / NBRC 12614 / NCIMB 9131 / NCTC 9757 / MK) protein is Malate dehydrogenase.